Here is a 1723-residue protein sequence, read N- to C-terminus: Homeobox protein 5 (1723 aa).

The segment covering Q36 to Q50 has biased composition (low complexity). 9 disordered regions span residues Q36–T425, S440–Q522, E543–T756, G878–L978, I1080–N1214, V1226–Q1264, I1345–S1399, Q1456–T1498, and H1513–K1547. Over residues D51–Y72 the composition is skewed to polar residues. Composition is skewed to low complexity over residues N73–S107 and N114–N212. 2 stretches are compositionally biased toward polar residues: residues S223–P237 and G244–D257. 2 stretches are compositionally biased toward low complexity: residues N258 to S284 and N291 to N350. A coiled-coil region spans residues Y300–Q351. Over residues Q351–M369 the composition is skewed to polar residues. Composition is skewed to low complexity over residues Q371 to S421 and S440 to S465. Residues M483–N510 show a composition bias toward polar residues. 3 stretches are compositionally biased toward low complexity: residues L511 to Q522, N544 to N571, and N581 to N593. Positions H632–M655 are enriched in polar residues. The span at L660–F669 shows a compositional bias: gly residues. Residues I673–Q685 show a composition bias toward polar residues. Composition is skewed to low complexity over residues S686–M699, S710–L727, and S734–T745. Positions P746–L755 are enriched in pro residues. The segment covering N882 to T928 has biased composition (low complexity). Positions S929–F945 are enriched in polar residues. Composition is skewed to low complexity over residues Q946–S977 and N1082–S1146. Composition is skewed to polar residues over residues P1147–G1159 and D1176–Q1187. A coiled-coil region spans residues Q1193 to L1270. The segment covering Q1194–N1214 has biased composition (low complexity). Residues V1226–E1242 are compositionally biased toward polar residues. Low complexity-rich tracts occupy residues Q1243–Q1264, N1347–P1384, Q1456–P1480, S1487–T1498, and S1518–P1528. Positions V1431–T1464 form a coiled coil. A compositionally biased stretch (polar residues) spans H1529–S1543. The segment at residues S1543–P1607 is a DNA-binding region (homeobox). Positions F1553 to T1588 constitute an EF-hand domain. 2 disordered regions span residues N1598–S1625 and L1661–E1723. Low complexity predominate over residues T1612–S1625. Residues L1632–N1702 adopt a coiled-coil conformation. Residues S1665 to M1675 are compositionally biased toward polar residues. Residues N1676–E1723 are compositionally biased toward low complexity.

The protein localises to the nucleus. Putative transcription factor. This is Homeobox protein 5 (hbx5-1) from Dictyostelium discoideum (Social amoeba).